Here is a 141-residue protein sequence, read N- to C-terminus: Cystatin-SN (141 aa).

The signal sequence occupies residues 1–20; it reads MAQYLSTLLLLLATLAVALA. Residues 76-80 carry the Secondary area of contact motif; the sequence is QTVGG. Intrachain disulfides connect cysteine 94–cysteine 104 and cysteine 118–cysteine 138.

Belongs to the cystatin family. Expressed in submandibular and sublingual saliva but not in parotid saliva (at protein level). Expressed in saliva, tears, urine and seminal fluid.

The protein resides in the secreted. In terms of biological role, human saliva appears to contain several cysteine proteinase inhibitors that are immunologically related to cystatin S but that differ in their specificity due to amino acid sequence differences. Cystatin SN, with a pI of 7.5, is a much better inhibitor of papain and dipeptidyl peptidase I than is cystatin S, although both inhibit ficin equally well. This is Cystatin-SN (CST1) from Homo sapiens (Human).